A 177-amino-acid polypeptide reads, in one-letter code: Interleukin-10 (177 aa).

Residues 1–19 form the signal peptide; that stretch reads MPSSSAVLCCLVFLAGVAA. 2 disulfide bridges follow: Cys-31-Cys-127 and Cys-81-Cys-133. The N-linked (GlcNAc...) asparagine glycan is linked to Asn-135.

It belongs to the IL-10 family. Homodimer. Interacts with IL10RA and IL10RB.

It is found in the secreted. Its function is as follows. Major immune regulatory cytokine that acts on many cells of the immune system where it has profound anti-inflammatory functions, limiting excessive tissue disruption caused by inflammation. Mechanistically, IL10 binds to its heterotetrameric receptor comprising IL10RA and IL10RB leading to JAK1 and STAT2-mediated phosphorylation of STAT3. In turn, STAT3 translocates to the nucleus where it drives expression of anti-inflammatory mediators. Targets antigen-presenting cells (APCs) such as macrophages and monocytes and inhibits their release of pro-inflammatory cytokines including granulocyte-macrophage colony-stimulating factor /GM-CSF, granulocyte colony-stimulating factor/G-CSF, IL-1 alpha, IL-1 beta, IL-6, IL-8 and TNF-alpha. Also interferes with antigen presentation by reducing the expression of MHC-class II and co-stimulatory molecules, thereby inhibiting their ability to induce T cell activation. In addition, controls the inflammatory response of macrophages by reprogramming essential metabolic pathways including mTOR signaling. This chain is Interleukin-10 (IL10), found in Ovis aries (Sheep).